We begin with the raw amino-acid sequence, 131 residues long: Profilin-1 (131 aa).

This sequence belongs to the profilin family. In terms of assembly, occurs in many kinds of cells as a complex with monomeric actin in a 1:1 ratio. In terms of tissue distribution, cytoplasmic distribution in hypocotyls. In root nodules, it is found in all cells, but is more abundant in the vascular tissue as well as the endodermis.

The protein resides in the cytoplasm. The protein localises to the cytoskeleton. In terms of biological role, binds to actin and affects the structure of the cytoskeleton. At high concentrations, profilin prevents the polymerization of actin, whereas it enhances it at low concentrations. By binding to PIP2, it inhibits the formation of IP3 and DG. In Phaseolus vulgaris (Kidney bean), this protein is Profilin-1.